We begin with the raw amino-acid sequence, 398 residues long: Queuine tRNA-ribosyltransferase (398 aa).

The active-site Proton acceptor is D102. Residues 102-106 (DSGGF), D156, Q205, and G232 each bind substrate. Residues 263-269 (GVGTPED) are RNA binding. D282 (nucleophile) is an active-site residue. Residues 287 to 291 (TRNAR) are RNA binding; important for wobble base 34 recognition. Residues C320, C322, C325, and H362 each coordinate Zn(2+).

The protein belongs to the queuine tRNA-ribosyltransferase family. As to quaternary structure, homodimer. Within each dimer, one monomer is responsible for RNA recognition and catalysis, while the other monomer binds to the replacement base PreQ1. It depends on Zn(2+) as a cofactor.

The catalysed reaction is 7-aminomethyl-7-carbaguanine + guanosine(34) in tRNA = 7-aminomethyl-7-carbaguanosine(34) in tRNA + guanine. Its pathway is tRNA modification; tRNA-queuosine biosynthesis. Catalyzes the base-exchange of a guanine (G) residue with the queuine precursor 7-aminomethyl-7-deazaguanine (PreQ1) at position 34 (anticodon wobble position) in tRNAs with GU(N) anticodons (tRNA-Asp, -Asn, -His and -Tyr). Catalysis occurs through a double-displacement mechanism. The nucleophile active site attacks the C1' of nucleotide 34 to detach the guanine base from the RNA, forming a covalent enzyme-RNA intermediate. The proton acceptor active site deprotonates the incoming PreQ1, allowing a nucleophilic attack on the C1' of the ribose to form the product. After dissociation, two additional enzymatic reactions on the tRNA convert PreQ1 to queuine (Q), resulting in the hypermodified nucleoside queuosine (7-(((4,5-cis-dihydroxy-2-cyclopenten-1-yl)amino)methyl)-7-deazaguanosine). This chain is Queuine tRNA-ribosyltransferase, found in Polaromonas sp. (strain JS666 / ATCC BAA-500).